The following is a 490-amino-acid chain: tRNA-guanine(15) transglycosylase (490 aa).

D90 serves as the catalytic Nucleophile. Substrate is bound by residues D125 and A193. Positions 276, 278, and 281 each coordinate Zn(2+).

Belongs to the archaeosine tRNA-ribosyltransferase family. Requires Zn(2+) as cofactor.

The catalysed reaction is guanosine(15) in tRNA + 7-cyano-7-deazaguanine = 7-cyano-7-carbaguanosine(15) in tRNA + guanine. Its pathway is tRNA modification; archaeosine-tRNA biosynthesis. In terms of biological role, exchanges the guanine residue with 7-cyano-7-deazaguanine (preQ0) at position 15 in the dihydrouridine loop (D-loop) of archaeal tRNAs. The chain is tRNA-guanine(15) transglycosylase from Methanosarcina acetivorans (strain ATCC 35395 / DSM 2834 / JCM 12185 / C2A).